Reading from the N-terminus, the 443-residue chain is Phosphoglucosamine mutase (443 aa).

Ser-100 (phosphoserine intermediate) is an active-site residue. Mg(2+) contacts are provided by Ser-100, Asp-239, Asp-241, and Asp-243. Ser-100 carries the phosphoserine modification.

This sequence belongs to the phosphohexose mutase family. Mg(2+) serves as cofactor. In terms of processing, activated by phosphorylation.

It carries out the reaction alpha-D-glucosamine 1-phosphate = D-glucosamine 6-phosphate. Functionally, catalyzes the conversion of glucosamine-6-phosphate to glucosamine-1-phosphate. The polypeptide is Phosphoglucosamine mutase (Shewanella sediminis (strain HAW-EB3)).